A 465-amino-acid chain; its full sequence is uncharacterized protein (465 aa).

The chain crosses the membrane as a helical span at residues 56-76 (ILYMIIFAIFGLLPFLIALIF). The disordered stretch occupies residues 177–198 (KFNKSKKSNKINDKTPILNNNN). Residues 273 to 293 (LIFLLVSTILLIALIGFILII) traverse the membrane as a helical segment. The tract at residues 411–449 (NNYNNSNNNNNSNNSNSNNNNNNNNNNNNYNNNNYNNNN) is disordered.

The protein localises to the membrane. This is an uncharacterized protein from Dictyostelium discoideum (Social amoeba).